The sequence spans 241 residues: 1-(5-phosphoribosyl)-5-[(5-phosphoribosylamino)methylideneamino] imidazole-4-carboxamide isomerase (241 aa).

Asp8 acts as the Proton acceptor in catalysis. The active-site Proton donor is the Asp131.

This sequence belongs to the HisA/HisF family.

Its subcellular location is the cytoplasm. The enzyme catalyses 1-(5-phospho-beta-D-ribosyl)-5-[(5-phospho-beta-D-ribosylamino)methylideneamino]imidazole-4-carboxamide = 5-[(5-phospho-1-deoxy-D-ribulos-1-ylimino)methylamino]-1-(5-phospho-beta-D-ribosyl)imidazole-4-carboxamide. Its pathway is amino-acid biosynthesis; L-histidine biosynthesis; L-histidine from 5-phospho-alpha-D-ribose 1-diphosphate: step 4/9. The sequence is that of 1-(5-phosphoribosyl)-5-[(5-phosphoribosylamino)methylideneamino] imidazole-4-carboxamide isomerase from Sorangium cellulosum (strain So ce56) (Polyangium cellulosum (strain So ce56)).